An 834-amino-acid chain; its full sequence is Enhancer of filamentation 1 (834 aa).

The region spanning 3–65 (ARNLMARALY…PGNRVKLLIG (63 aa)) is the SH3 domain. Phosphotyrosine is present on residues Tyr92, Tyr164, Tyr166, Tyr177, Tyr189, Tyr214, and Tyr223. Ser296 is subject to Phosphoserine. Position 317 is a phosphotyrosine (Tyr317). Disordered stretches follow at residues 328-402 (PPAE…DKRL) and 584-624 (SQMP…SERS). The segment covering 332-344 (TSEKANPEERDGV) has biased composition (basic and acidic residues). The short motif at 360–363 (DVVD) is the Caspase cleavage related site element. Positions 368 to 397 (LSFSSTGSTRSNMSTSSTTSKESSVSASPS) are enriched in low complexity. Residue Ser369 is modified to Phosphoserine. The segment at 710–760 (FYYDQCETHYISLLNAIDALFSCVSSAQPPRIFVAHSKFVILSAHKLVFIG) is divergent helix-loop-helix motif. Positions 710 to 834 (FYYDQCETHY…KRSLLEMATF (125 aa)) are required for interaction with PLK1. Ser780 carries the phosphoserine modification. Phosphothreonine is present on Thr804.

It belongs to the CAS family. Homodimer. Forms heterodimers with BCAR1/p130cas. Forms complexes with PTK2B/RAFTK, adapter protein CRKL and LYN kinase. Part of a complex composed of NEDD9, AURKA and CTTN; within the complex NEDD9 acts as a scaffold protein and is required for complex formation. Part of a ternary complex composed of SMAD3, ITCH/AIP4 and NEDD9/HEF1; within the complex NEDD9/HEF1 interacts (via N-terminus) with ITCH/AIP4; the complex mediates ubiquitination and proteasomal degradation of NEDD9/HEF1. Interacts with ID2. Interacts with CTTN (via N-terminus). Interacts with MICAL. Interacts with TXNL4/DIM1. Interacts with BCAR3 (via Ras-GEF domain). Interacts with SH2D3C isoform 1 and isoform 2. Interacts with BCAR3. Interacts with ECT2. Interacts with PTPN11/SHP-2 (via SH2 domains); the interaction is enhanced when NEDD9/CAS-L is tyrosine phosphorylated. Interacts (via C-terminus) with PLK1 (via polo box domain). Interacts with NKX2-5. Interacts with SMAD3; the interaction is inhibited by oxidation of NEDD9. Interacts with ABL1; interaction is induced by CXCL12-mediated phosphorylation of NEDD/HEF1. Interacts (via SH3 domain) with PTK2/FAK. Interacts with FYN; in the presence of PTK2. Interacts with INPPL1/SHIP2. Post-translationally, polyubiquitinated by ITCH/AIP4, leading to proteasomal degradation. In terms of processing, PTK2/FAK1 phosphorylates the protein at the YDYVHL motif (conserved among all cas proteins) following integrin stimulation. The SRC family kinases (FYN, SRC, LCK and CRK) are recruited to the phosphorylated sites and can phosphorylate other tyrosine residues. Ligation of either integrin beta-1 or B-cell antigen receptor on tonsillar B-cells and B-cell lines promotes tyrosine phosphorylation and both integrin and BCR-mediated tyrosine phosphorylation requires an intact actin network. Phosphorylation is required to recruit NEDD9 to T-cell receptor microclusters at the periphery of newly formed immunological synapses. In fibroblasts transformation with oncogene v-ABL results in an increase in tyrosine phosphorylation. Transiently phosphorylated following CD3 cross-linking and this phosphorylated form binds to CRKL and C3G. A mutant lacking the SH3 domain is phosphorylated upon CD3 cross-linking but not upon integrin beta-1 cross-linking. Tyrosine phosphorylation occurs upon stimulation of the G-protein coupled C1a calcitonin receptor. Calcitonin-stimulated tyrosine phosphorylation is mediated by calcium- and protein kinase C-dependent mechanisms and requires the integrity of the actin cytoskeleton. Phosphorylation at Ser-369 induces proteasomal degradation. Phosphorylated by LYN. Phosphorylation at Ser-780 by CSNK1D or CSNK1E, or phosphorylation of Thr-804 by CSNK1E enhances the interaction of NEDD9 with PLK1.

The protein localises to the cytoplasm. Its subcellular location is the cell cortex. It is found in the nucleus. The protein resides in the golgi apparatus. It localises to the cell projection. The protein localises to the lamellipodium. Its subcellular location is the cell junction. It is found in the focal adhesion. The protein resides in the cytoskeleton. It localises to the spindle pole. The protein localises to the cilium. Its subcellular location is the cilium basal body. It is found in the basolateral cell membrane. Negatively regulates embryonic fibroblast migration. May play an important role in integrin beta-1 or B cell antigen receptor (BCR) mediated signaling in B- and T-cells. Integrin beta-1 stimulation leads to recruitment of various proteins including CRKl and SHPTP2 to the tyrosine phosphorylated form. Promotes adhesion and migration of lymphocytes; as a result required for the correct migration of lymphocytes to the spleen and other secondary lymphoid organs. Plays a role in the organization of T-cell F-actin cortical cytoskeleton and the centralization of T-cell receptor microclusters at the immunological synapse. Negatively regulates cilia outgrowth in polarized cysts. Modulates cilia disassembly via activation of AURKA-mediated phosphorylation of HDAC6 and subsequent deacetylation of alpha-tubulin. In conjunction with NKX2-5, positively regulates transcription of genes such as COL3A1 and MMP2, resulting in increased pulmonary endothelial fibrosis in response to hypoxia. Positively regulates RANKL-induced osteoclastogenesis. Required for the maintenance of hippocampal dendritic spines in the dentate gyrus and CA1 regions, thereby involved in spatial learning and memory. In Canis lupus familiaris (Dog), this protein is Enhancer of filamentation 1.